The sequence spans 300 residues: tRNA pseudouridine synthase B (300 aa).

D38 (nucleophile) is an active-site residue.

It belongs to the pseudouridine synthase TruB family. Type 1 subfamily.

It carries out the reaction uridine(55) in tRNA = pseudouridine(55) in tRNA. In terms of biological role, responsible for synthesis of pseudouridine from uracil-55 in the psi GC loop of transfer RNAs. The sequence is that of tRNA pseudouridine synthase B from Dehalococcoides mccartyi (strain CBDB1).